The primary structure comprises 165 residues: Lipoprotein signal peptidase (165 aa).

Transmembrane regions (helical) follow at residues 68-88 (PLLP…GLFG) and 100-120 (GFLL…GEVI). Catalysis depends on residues aspartate 121 and aspartate 137. The helical transmembrane segment at 130-150 (FPVFNIADISINVGLACLIFA) threads the bilayer.

Belongs to the peptidase A8 family.

The protein resides in the cell inner membrane. The enzyme catalyses Release of signal peptides from bacterial membrane prolipoproteins. Hydrolyzes -Xaa-Yaa-Zaa-|-(S,diacylglyceryl)Cys-, in which Xaa is hydrophobic (preferably Leu), and Yaa (Ala or Ser) and Zaa (Gly or Ala) have small, neutral side chains.. It functions in the pathway protein modification; lipoprotein biosynthesis (signal peptide cleavage). Functionally, this protein specifically catalyzes the removal of signal peptides from prolipoproteins. This Acaryochloris marina (strain MBIC 11017) protein is Lipoprotein signal peptidase.